Reading from the N-terminus, the 571-residue chain is Carboxylesterase 3B (571 aa).

A signal peptide spans 1–31; the sequence is MTNMRTMIPAGSSVLVWVTCLLLAFVTTVTG. Cysteine 100 and cysteine 127 are joined by a disulfide. The Acyl-ester intermediate role is filled by serine 232. Cysteines 284 and 295 form a disulfide. Residue asparagine 311 is glycosylated (N-linked (GlcNAc...) asparagine). Residues glutamate 347 and histidine 460 each act as charge relay system in the active site. The Prevents secretion from ER motif lies at 568-571; the sequence is PEEL.

The protein belongs to the type-B carboxylesterase/lipase family.

The protein localises to the endoplasmic reticulum lumen. The catalysed reaction is a carboxylic ester + H2O = an alcohol + a carboxylate + H(+). Its function is as follows. Involved in the detoxification of xenobiotics and in the activation of ester and amide prodrugs. The protein is Carboxylesterase 3B (Ces3b) of Mus musculus (Mouse).